We begin with the raw amino-acid sequence, 414 residues long: tRNA N6-adenosine threonylcarbamoyltransferase, mitochondrial (414 aa).

Residues 1–29 (MLILTKTAGVFFKPSKRKVYEFLRSFNFH) constitute a mitochondrion transit peptide. Residues Lys-74 and Lys-140 each carry the N6-acetyllysine modification. 2 residues coordinate a divalent metal cation: His-147 and His-151. Substrate is bound by residues 169-173 (LISGG) and Asp-202. The residue at position 203 (Lys-203) is an N6-acetyllysine. Residues Gly-222 and Glu-226 each coordinate substrate. N6-acetyllysine is present on residues Lys-230, Lys-240, and Lys-299. Substrate contacts are provided by residues 329-330 (SN) and Thr-357. Asp-358 lines the a divalent metal cation pocket.

Belongs to the KAE1 / TsaD family. In terms of assembly, monomer. A divalent metal cation is required as a cofactor. Widely expressed, with maximum expression in pituitary gland, prostate, rectum and uterus.

The protein localises to the mitochondrion. It carries out the reaction L-threonylcarbamoyladenylate + adenosine(37) in tRNA = N(6)-L-threonylcarbamoyladenosine(37) in tRNA + AMP + H(+). Required for the formation of a threonylcarbamoyl group on adenosine at position 37 (t(6)A37) in mitochondrial tRNAs that read codons beginning with adenine. Probably involved in the transfer of the threonylcarbamoyl moiety of threonylcarbamoyl-AMP (TC-AMP) to the N6 group of A37. Involved in mitochondrial genome maintenance. This chain is tRNA N6-adenosine threonylcarbamoyltransferase, mitochondrial, found in Homo sapiens (Human).